We begin with the raw amino-acid sequence, 40 residues long: Photosystem II reaction center protein J (40 aa).

The chain crosses the membrane as a helical span at residues 8-28; that stretch reads IPLWVIGTVAGILVIGLIGIF.

The protein belongs to the PsbJ family. As to quaternary structure, PSII is composed of 1 copy each of membrane proteins PsbA, PsbB, PsbC, PsbD, PsbE, PsbF, PsbH, PsbI, PsbJ, PsbK, PsbL, PsbM, PsbT, PsbX, PsbY, PsbZ, Psb30/Ycf12, at least 3 peripheral proteins of the oxygen-evolving complex and a large number of cofactors. It forms dimeric complexes.

The protein localises to the plastid. Its subcellular location is the chloroplast thylakoid membrane. One of the components of the core complex of photosystem II (PSII). PSII is a light-driven water:plastoquinone oxidoreductase that uses light energy to abstract electrons from H(2)O, generating O(2) and a proton gradient subsequently used for ATP formation. It consists of a core antenna complex that captures photons, and an electron transfer chain that converts photonic excitation into a charge separation. The chain is Photosystem II reaction center protein J from Lepidium virginicum (Virginia pepperweed).